Here is a 236-residue protein sequence, read N- to C-terminus: UPF0502 protein BamMC406_5439 (236 aa).

It belongs to the UPF0502 family.

In Burkholderia ambifaria (strain MC40-6), this protein is UPF0502 protein BamMC406_5439.